Reading from the N-terminus, the 211-residue chain is MGQKVNPIGFRLGVIKTWDSKWYAEKDYAKLLHEDLKLRNFLKKRLYHSGVSKIEIERAAGKAKINIFTARPGLIIGKKGSEVETLKKELAKLTDKEVYLNIQEVRKPELDAQLVAENVAMQLERRIAFRRAMKKSVTSTLKFGAKGIRITCSGRLGGAEMSRTEWYREGRVPLHTLRADIDYGFAEAKTTYGIIGVKVLLFKGEVLSAKK.

The 69-residue stretch at 38 to 106 folds into the KH type-2 domain; the sequence is LRNFLKKRLY…EVYLNIQEVR (69 aa).

This sequence belongs to the universal ribosomal protein uS3 family. As to quaternary structure, part of the 30S ribosomal subunit. Forms a tight complex with proteins S10 and S14.

Binds the lower part of the 30S subunit head. Binds mRNA in the 70S ribosome, positioning it for translation. The protein is Small ribosomal subunit protein uS3 of Citrifermentans bemidjiense (strain ATCC BAA-1014 / DSM 16622 / JCM 12645 / Bem) (Geobacter bemidjiensis).